Reading from the N-terminus, the 488-residue chain is MALLEIAKKSLLAAEKYLALNSLISVQSQPELLSQVQASQERISADSGESKSSIDGQLIAVKDNICTTDFPTTCASKLLEQYVSPFDATVVRKAKEAGAVIMGKTNMDEFGMGSHSMYSHFGPVMQSAEDGRPARSAGGSSGGSAVAVATGMCYAALGTDTGGSVRLPAAYCGIVGFKPSYGMLSRWGVVAYANSLDTLYDAINGHDDNDPTSITPQTRERIQDRLSRSRRRGQRLAIGYPEEFNLVELDDPVRDAWENTLAHLNSQSHRIAPVSLPHTKHALSAYYVLAPAEASSNLAKYDGVRYGYRDPADRSQDGLLFSPTRANFGAEVRRRIIAGAYSLSSEAIDNYFLKAQSARRIIQRDFSNAFAQPNYLITDNLEEGRGKEGVDVLIAPCSLSKAPFLEDVKMQKSALDSYVNDVLTVPASLAGIPAICLPVMHGENDPVGIQVMAQYGDEETMWEVAKIIEEGLGSGVGSKTQPTNPTVN.

Catalysis depends on charge relay system residues lysine 62 and serine 140. Serine 164 functions as the Acyl-ester intermediate in the catalytic mechanism. Positions glycine 205–arginine 228 are disordered. The segment covering threonine 218–serine 227 has biased composition (basic and acidic residues).

The protein belongs to the amidase family. GatA subfamily. As to quaternary structure, subunit of the heterotrimeric GatCAB amidotransferase (AdT) complex, composed of A, B and C subunits.

The protein localises to the mitochondrion. The enzyme catalyses L-glutamyl-tRNA(Gln) + L-glutamine + ATP + H2O = L-glutaminyl-tRNA(Gln) + L-glutamate + ADP + phosphate + H(+). In terms of biological role, allows the formation of correctly charged Gln-tRNA(Gln) through the transamidation of misacylated Glu-tRNA(Gln) in the mitochondria. The reaction takes place in the presence of glutamine and ATP through an activated gamma-phospho-Glu-tRNA(Gln). The chain is Glutamyl-tRNA(Gln) amidotransferase subunit A, mitochondrial from Tuber melanosporum (strain Mel28) (Perigord black truffle).